The following is a 216-amino-acid chain: Adenylate kinase (216 aa).

10 to 15 (GAGKGT) serves as a coordination point for ATP. Residues 30–59 (STGDMFRAAMKAETELGLQAKSFIDKGALV) form an NMP region. Residues Thr-31, Arg-36, 57 to 59 (ALV), 85 to 88 (GFPR), and Gln-92 each bind AMP. The tract at residues 126 to 163 (GRRICKECGATYHLEFNPPAKADVCDKCGGELYQRSDD) is LID. Residue Arg-127 participates in ATP binding. Zn(2+) contacts are provided by Cys-130 and Cys-133. ATP is bound at residue 136 to 137 (TY). Positions 150 and 153 each coordinate Zn(2+). Arg-160 and Arg-171 together coordinate AMP. Position 199 (Gln-199) interacts with ATP.

The protein belongs to the adenylate kinase family. Monomer.

The protein localises to the cytoplasm. It catalyses the reaction AMP + ATP = 2 ADP. The protein operates within purine metabolism; AMP biosynthesis via salvage pathway; AMP from ADP: step 1/1. Its function is as follows. Catalyzes the reversible transfer of the terminal phosphate group between ATP and AMP. Plays an important role in cellular energy homeostasis and in adenine nucleotide metabolism. This is Adenylate kinase from Bacillus cytotoxicus (strain DSM 22905 / CIP 110041 / 391-98 / NVH 391-98).